The chain runs to 342 residues: Keratin-associated protein 29-1 (342 aa).

Repeat copies occupy residues 5 to 9 (CCPEN), 91 to 95 (CCASD), 239 to 243 (CCVPP), 309 to 313 (CCVTG), and 324 to 328 (CCPPT). Residues 5–328 (CCPENPTAVP…SSGPGCCPPT (324 aa)) are 5 X 5 AA repeats of C-C-X(3).

The protein belongs to the KRTAP type 10 family.

The polypeptide is Keratin-associated protein 29-1 (Krtap29-1) (Mus musculus (Mouse)).